Here is a 66-residue protein sequence, read N- to C-terminus: Large ribosomal subunit protein bL31 (66 aa).

The Zn(2+) site is built by C16, C18, C36, and C39.

It belongs to the bacterial ribosomal protein bL31 family. Type A subfamily. In terms of assembly, part of the 50S ribosomal subunit. The cofactor is Zn(2+).

Its function is as follows. Binds the 23S rRNA. This Clostridioides difficile (strain 630) (Peptoclostridium difficile) protein is Large ribosomal subunit protein bL31.